We begin with the raw amino-acid sequence, 590 residues long: MGKRLDLSTLTDEEAEHVWAVVQRDFDLRRREEERLQGLKGKIQKESSKRELLSDTAHLNETHCARCLQPYRLLLNSRRQCLECSLFVCKSCSHAHPEEQGWLCDPCHLARVVKIGSLEWYYQHVRARFKRFGSAKVIRSLCGRLQGGGGSEPSLEEGNGDSEQTDEDGDLDTEARDQPLNSKKKKRLLSFRDVDFEEDSDHLVQPCSQTLGLSSVPESAHSLQSLSGEPYSEDTTSLEPEGLEETGARALGCRPSPEVQPCSPLPSGEDAHAELDSPAASCKSAFGTTAMPGTDDVRGKHLPSQYLADVDTSDEDSIQGPRAASQHSKRRARTVPETQILELNKRMSAVEHLLVHLENTVLPPSAQEPTVETHPSADTEEETLRRRLEELTSNISGSSTSSEDETKPDGTFLGGSPKVCTDTGHMETQERNPRSPGNPARPTKSTDEELSEMEDRVAMTASEVQQAESEISDIESRIAALRAAGLTVKPSGKPRRKSGIPIFLPRVTEKLDRIPKTPPADPDDQAKMPKATTAVPSLLRRKYSPSSQGVDSGSFDRKSVYRGSLTQRNPNGRRGTARHIFAKPVMAQQP.

A RabBD domain is found at 4 to 124 (RLDLSTLTDE…IGSLEWYYQH (121 aa)). An FYVE-type zinc finger spans residues 64-107 (CARCLQPYRLLLNSRRQCLECSLFVCKSCSHAHPEEQGWLCDPC). Disordered stretches follow at residues 147-182 (GGGG…PLNS), 215-276 (SVPE…AELD), 311-335 (DTSD…ARTV), 361-472 (VLPP…SEIS), and 485-590 (GLTV…AQQP). The segment covering 154-172 (SLEEGNGDSEQTDEDGDLD) has biased composition (acidic residues). Residues 215–238 (SVPESAHSLQSLSGEPYSEDTTSL) show a composition bias toward polar residues. Residues 339 to 485 (QILELNKRMS…SRIAALRAAG (147 aa)) adopt a coiled-coil conformation. Over residues 391 to 401 (LTSNISGSSTS) the composition is skewed to low complexity. Positions 424-433 (GHMETQERNP) are enriched in basic and acidic residues.

Binds RAB27A that has been activated by GTP-binding via its N-terminus. Binds MYO5A via its C-terminal coiled coil domain. In terms of tissue distribution, highly expressed in embryos at day 7; not detectable at day 11. Highly expressed in adult stomach; detected at lower levels in kidney, lung, skin and small intestine. Detected in melanocytes.

Its subcellular location is the melanosome. Its function is as follows. Rab effector protein involved in melanosome transport. Serves as link between melanosome-bound RAB27A and the motor protein MYO5A. In Mus musculus (Mouse), this protein is Melanophilin (Mlph).